A 291-amino-acid polypeptide reads, in one-letter code: ATP synthase gamma chain (291 aa).

It belongs to the ATPase gamma chain family. In terms of assembly, F-type ATPases have 2 components, CF(1) - the catalytic core - and CF(0) - the membrane proton channel. CF(1) has five subunits: alpha(3), beta(3), gamma(1), delta(1), epsilon(1). CF(0) has three main subunits: a, b and c.

The protein localises to the cell inner membrane. Functionally, produces ATP from ADP in the presence of a proton gradient across the membrane. The gamma chain is believed to be important in regulating ATPase activity and the flow of protons through the CF(0) complex. The chain is ATP synthase gamma chain from Pelodictyon phaeoclathratiforme (strain DSM 5477 / BU-1).